The chain runs to 292 residues: Sulfhydrogenase 1 subunit gamma (292 aa).

Residues 15–115 (YALHRVKVLK…RGPYGNGFPV (101 aa)) enclose the FAD-binding FR-type domain. 4 residues coordinate [2Fe-2S] cluster: Cys253, Cys258, Cys261, and Cys273.

As to quaternary structure, heterotetramer of alpha, beta, gamma and delta subunits. The nickel-containing alpha and delta subunits constitute the hydrogenase activity. The beta and gamma subunits (flavin-containing dimer) constitute the sulfur reductase activity. FAD serves as cofactor. Requires [2Fe-2S] cluster as cofactor.

The protein localises to the cytoplasm. It carries out the reaction n sulfur + H2 = (n-1) sulfur + hydrogen sulfide + H(+). With respect to regulation, stimulated by rubredoxin at pH 7.6 but not ferredoxin. Functionally, part of a bifunctional enzyme complex that functions as an NADPH-dependent hydrogen-evolving hydrogenase with sulfur reducing activity. May play a role in hydrogen cycling during fermentative growth. Activity not exhibited with NAD. The beta and gamma subunits form the sulfur reducing component that catalyzes the cytoplasmic production of hydrogen sulfide in the presence of elemental sulfur. Not active in the presence of sodium sulfate, sodium sulfite, sodium thiosulfate or cysteine. This Pyrococcus furiosus (strain ATCC 43587 / DSM 3638 / JCM 8422 / Vc1) protein is Sulfhydrogenase 1 subunit gamma.